A 708-amino-acid polypeptide reads, in one-letter code: Elongation factor G (708 aa).

In terms of domain architecture, tr-type G spans 8–290; sequence KRYRNIGISA…AVIQYLPAPM (283 aa). GTP is bound by residues 17–24, 88–92, and 142–145; these read AHIDAGKT, DTPGH, and NKMD.

This sequence belongs to the TRAFAC class translation factor GTPase superfamily. Classic translation factor GTPase family. EF-G/EF-2 subfamily.

The protein localises to the cytoplasm. Its function is as follows. Catalyzes the GTP-dependent ribosomal translocation step during translation elongation. During this step, the ribosome changes from the pre-translocational (PRE) to the post-translocational (POST) state as the newly formed A-site-bound peptidyl-tRNA and P-site-bound deacylated tRNA move to the P and E sites, respectively. Catalyzes the coordinated movement of the two tRNA molecules, the mRNA and conformational changes in the ribosome. This is Elongation factor G from Psychrobacter cryohalolentis (strain ATCC BAA-1226 / DSM 17306 / VKM B-2378 / K5).